A 315-amino-acid polypeptide reads, in one-letter code: Oxalate oxidoreductase subunit delta (315 aa).

2 4Fe-4S ferredoxin-type domains span residues 252 to 280 (QRPI…TRTE) and 281 to 310 (EGPV…NVPE). 8 residues coordinate [4Fe-4S] cluster: C261, C264, C267, C271, C290, C293, C296, and C300.

In terms of assembly, dimer of heterotrimer of one alpha, one beta and one delta subunit. [4Fe-4S] cluster is required as a cofactor.

It catalyses the reaction oxidized 2[4Fe-4S]-[ferredoxin] + oxalate = reduced 2[4Fe-4S]-[ferredoxin] + 2 CO2. Its function is as follows. Catalyzes the anaerobic oxidation of oxalate using a broad range of electron acceptors, including ferredoxin and the nickel-dependent carbon monoxide dehydrogenase. Does not require coenzyme A as cosubstrate. Enables anaerobic growth on oxalate which is used as energy source by the bacteria. The chain is Oxalate oxidoreductase subunit delta from Moorella thermoacetica (strain ATCC 39073 / JCM 9320).